A 79-amino-acid polypeptide reads, in one-letter code: Bacteriochlorophyll c-binding protein (79 aa).

An a bacteriochlorophyll c-binding site is contributed by His25.

The protein belongs to the BChl C/E-binding protein family.

Its subcellular location is the chlorosome. The protein resides in the chlorosome envelope. Component of the photosynthetic apparatus. The light harvesting B740 complex binds bacteriochlorophyll c. The polypeptide is Bacteriochlorophyll c-binding protein (csmA) (Chlorobaculum tepidum (strain ATCC 49652 / DSM 12025 / NBRC 103806 / TLS) (Chlorobium tepidum)).